A 744-amino-acid polypeptide reads, in one-letter code: Catalase A (744 aa).

Catalysis depends on residues histidine 93 and asparagine 166. A heme-binding site is contributed by tyrosine 380.

The protein belongs to the catalase family. Requires heme as cofactor.

The protein localises to the peroxisome matrix. The enzyme catalyses 2 H2O2 = O2 + 2 H2O. Catalyzes the degradation of hydrogen peroxide (H(2)O(2)) generated by peroxisomal oxidases to water and oxygen, thereby protecting cells from the toxic effects of hydrogen peroxide. This is Catalase A (catA) from Emericella nidulans (strain FGSC A4 / ATCC 38163 / CBS 112.46 / NRRL 194 / M139) (Aspergillus nidulans).